Consider the following 612-residue polypeptide: Dihydroxy-acid dehydratase (612 aa).

D81 contributes to the Mg(2+) binding site. C122 contacts [2Fe-2S] cluster. Residues D123 and K124 each contribute to the Mg(2+) site. Residue K124 is modified to N6-carboxylysine. C195 is a binding site for [2Fe-2S] cluster. E491 serves as a coordination point for Mg(2+). Residue S517 is the Proton acceptor of the active site.

Belongs to the IlvD/Edd family. Homodimer. Requires [2Fe-2S] cluster as cofactor. Mg(2+) serves as cofactor.

It carries out the reaction (2R)-2,3-dihydroxy-3-methylbutanoate = 3-methyl-2-oxobutanoate + H2O. The catalysed reaction is (2R,3R)-2,3-dihydroxy-3-methylpentanoate = (S)-3-methyl-2-oxopentanoate + H2O. It functions in the pathway amino-acid biosynthesis; L-isoleucine biosynthesis; L-isoleucine from 2-oxobutanoate: step 3/4. The protein operates within amino-acid biosynthesis; L-valine biosynthesis; L-valine from pyruvate: step 3/4. In terms of biological role, functions in the biosynthesis of branched-chain amino acids. Catalyzes the dehydration of (2R,3R)-2,3-dihydroxy-3-methylpentanoate (2,3-dihydroxy-3-methylvalerate) into 2-oxo-3-methylpentanoate (2-oxo-3-methylvalerate) and of (2R)-2,3-dihydroxy-3-methylbutanoate (2,3-dihydroxyisovalerate) into 2-oxo-3-methylbutanoate (2-oxoisovalerate), the penultimate precursor to L-isoleucine and L-valine, respectively. The polypeptide is Dihydroxy-acid dehydratase (Haemophilus influenzae (strain PittEE)).